Consider the following 692-residue polypeptide: Elongation factor G (692 aa).

The tr-type G domain maps to 8–282 (ENTRNIGIMA…AVIDYLPSPL (275 aa)). GTP contacts are provided by residues 17–24 (AHIDAGKT), 81–85 (DTPGH), and 135–138 (NKMD).

The protein belongs to the TRAFAC class translation factor GTPase superfamily. Classic translation factor GTPase family. EF-G/EF-2 subfamily.

The protein resides in the cytoplasm. Functionally, catalyzes the GTP-dependent ribosomal translocation step during translation elongation. During this step, the ribosome changes from the pre-translocational (PRE) to the post-translocational (POST) state as the newly formed A-site-bound peptidyl-tRNA and P-site-bound deacylated tRNA move to the P and E sites, respectively. Catalyzes the coordinated movement of the two tRNA molecules, the mRNA and conformational changes in the ribosome. This Bacillus cereus (strain AH820) protein is Elongation factor G.